The chain runs to 147 residues: uncharacterized protein (147 aa).

This is an uncharacterized protein from Mycolicibacterium smegmatis (Mycobacterium smegmatis).